We begin with the raw amino-acid sequence, 203 residues long: Small ribosomal subunit protein uS10m (203 aa).

A mitochondrion-targeting transit peptide spans 1-14 (MLRNTIALRSFIRT). Ser-193 carries the phosphoserine modification.

Belongs to the universal ribosomal protein uS10 family. Component of the mitochondrial small ribosomal subunit (mt-SSU). Mature yeast 74S mitochondrial ribosomes consist of a small (37S) and a large (54S) subunit. The 37S small subunit contains a 15S ribosomal RNA (15S mt-rRNA) and 34 different proteins. The 54S large subunit contains a 21S rRNA (21S mt-rRNA) and 46 different proteins.

The protein localises to the mitochondrion. In terms of biological role, component of the mitochondrial ribosome (mitoribosome), a dedicated translation machinery responsible for the synthesis of mitochondrial genome-encoded proteins, including at least some of the essential transmembrane subunits of the mitochondrial respiratory chain. The mitoribosomes are attached to the mitochondrial inner membrane and translation products are cotranslationally integrated into the membrane. This Saccharomyces cerevisiae (strain ATCC 204508 / S288c) (Baker's yeast) protein is Small ribosomal subunit protein uS10m (RSM10).